A 127-amino-acid chain; its full sequence is Large ribosomal subunit protein bL17 (127 aa).

It belongs to the bacterial ribosomal protein bL17 family. Part of the 50S ribosomal subunit. Contacts protein L32.

This Lactobacillus johnsonii (strain CNCM I-12250 / La1 / NCC 533) protein is Large ribosomal subunit protein bL17.